Reading from the N-terminus, the 208-residue chain is Probable GTP-binding protein EngB (208 aa).

The EngB-type G domain maps to 23–205; sequence LTSEMVILGR…RQTLLKYLLT (183 aa). Residues 31–38, 57–61, 84–87, 154–157, and 182–184 each bind GTP; these read GRSNVGKS, GKTRL, DLPG, TKFD, and FNA. Residues serine 38 and threonine 59 each coordinate Mg(2+).

It belongs to the TRAFAC class TrmE-Era-EngA-EngB-Septin-like GTPase superfamily. EngB GTPase family. Requires Mg(2+) as cofactor.

In terms of biological role, necessary for normal cell division and for the maintenance of normal septation. In Helicobacter pylori (strain P12), this protein is Probable GTP-binding protein EngB.